Consider the following 347-residue polypeptide: Ribosomal RNA large subunit methyltransferase M (347 aa).

S-adenosyl-L-methionine contacts are provided by residues serine 184, 217–220 (APGG), aspartate 236, aspartate 256, and aspartate 272. The Proton acceptor role is filled by lysine 301.

Belongs to the class I-like SAM-binding methyltransferase superfamily. RNA methyltransferase RlmE family. RlmM subfamily. Monomer.

It is found in the cytoplasm. It catalyses the reaction cytidine(2498) in 23S rRNA + S-adenosyl-L-methionine = 2'-O-methylcytidine(2498) in 23S rRNA + S-adenosyl-L-homocysteine + H(+). Catalyzes the 2'-O-methylation at nucleotide C2498 in 23S rRNA. This Xanthomonas oryzae pv. oryzae (strain MAFF 311018) protein is Ribosomal RNA large subunit methyltransferase M.